The chain runs to 146 residues: uncharacterized protein (146 aa).

Disordered stretches follow at residues 1-33 (MATFHRAHATSSVKPRARRHQEPNSGDWPGSYR) and 50-70 (QHWRPRSLGAGQGREDPSWEG).

This is an uncharacterized protein from Homo sapiens (Human).